Reading from the N-terminus, the 229-residue chain is Large ribosomal subunit protein uL1c (229 aa).

The protein belongs to the universal ribosomal protein uL1 family. As to quaternary structure, part of the 50S ribosomal subunit.

Its subcellular location is the plastid. The protein resides in the chloroplast. Binds directly to 23S rRNA. Might be involved in E site tRNA release (Potential). The polypeptide is Large ribosomal subunit protein uL1c (rpl1) (Porphyra purpurea (Red seaweed)).